The sequence spans 279 residues: Tryptophan synthase alpha chain (279 aa).

Residues glutamate 50 and aspartate 61 each act as proton acceptor in the active site.

Belongs to the TrpA family. As to quaternary structure, tetramer of two alpha and two beta chains.

The catalysed reaction is (1S,2R)-1-C-(indol-3-yl)glycerol 3-phosphate + L-serine = D-glyceraldehyde 3-phosphate + L-tryptophan + H2O. Its pathway is amino-acid biosynthesis; L-tryptophan biosynthesis; L-tryptophan from chorismate: step 5/5. Functionally, the alpha subunit is responsible for the aldol cleavage of indoleglycerol phosphate to indole and glyceraldehyde 3-phosphate. The sequence is that of Tryptophan synthase alpha chain from Rhizobium johnstonii (strain DSM 114642 / LMG 32736 / 3841) (Rhizobium leguminosarum bv. viciae).